Here is a 492-residue protein sequence, read N- to C-terminus: N-succinylglutamate 5-semialdehyde dehydrogenase (492 aa).

220–225 (GSASTG) contributes to the NAD(+) binding site. Catalysis depends on residues Glu243 and Cys277.

It belongs to the aldehyde dehydrogenase family. AstD subfamily.

It catalyses the reaction N-succinyl-L-glutamate 5-semialdehyde + NAD(+) + H2O = N-succinyl-L-glutamate + NADH + 2 H(+). It functions in the pathway amino-acid degradation; L-arginine degradation via AST pathway; L-glutamate and succinate from L-arginine: step 4/5. Catalyzes the NAD-dependent reduction of succinylglutamate semialdehyde into succinylglutamate. The chain is N-succinylglutamate 5-semialdehyde dehydrogenase from Salmonella enteritidis PT4 (strain P125109).